The sequence spans 188 residues: GTP cyclohydrolase 1 (188 aa).

Zn(2+) is bound by residues C75, H78, and C146.

It belongs to the GTP cyclohydrolase I family. Toroid-shaped homodecamer, composed of two pentamers of five dimers.

The enzyme catalyses GTP + H2O = 7,8-dihydroneopterin 3'-triphosphate + formate + H(+). It participates in cofactor biosynthesis; 7,8-dihydroneopterin triphosphate biosynthesis; 7,8-dihydroneopterin triphosphate from GTP: step 1/1. The sequence is that of GTP cyclohydrolase 1 from Hahella chejuensis (strain KCTC 2396).